The primary structure comprises 163 residues: Nucleotide-binding protein YajQ (163 aa).

The protein belongs to the YajQ family.

Nucleotide-binding protein. The polypeptide is Nucleotide-binding protein YajQ (Salmonella agona (strain SL483)).